We begin with the raw amino-acid sequence, 140 residues long: Histone H3-like protein (140 aa).

Residues 1 to 36 (MSRTKQTASKALGGKAPRKGISAKSIPSSGCSPAMP) are disordered. Lys5 carries the post-translational modification N6,N6,N6-trimethyllysine; alternate. Lys5 is subject to N6,N6-dimethyllysine; alternate. An N6-methyllysine; alternate mark is found at Lys5 and Lys10. An N6-acetyllysine; alternate mark is found at Lys10, Lys15, Lys19, and Lys24. N6,N6-dimethyllysine; alternate is present on Lys15. N6-methyllysine; alternate is present on residues Lys19 and Lys24. An N6-acetyllysine mark is found at Lys56 and Lys64.

Belongs to the histone H3 family. As to quaternary structure, the nucleosome is a histone octamer containing two molecules each of H2A, H2B, H3 and H4 assembled in one H3-H4 heterotetramer and two H2A-H2B heterodimers. The octamer wraps approximately 147 bp of DNA. Post-translationally, mono-, di- and trimethylated to form H3K4me1/2/3. H3K4me activates gene expression by regulating transcription elongation and plays a role in telomere length maintenance. H3K4me enrichment correlates with transcription levels, and occurs in a 5' to 3' gradient with H3K4me3 enrichment at the 5'-end of genes, shifting to H3K4me2 and then H3K4me1. In terms of processing, acetylation of histone H3 leads to transcriptional activation.

The protein localises to the nucleus. The protein resides in the chromosome. Functionally, core component of nucleosome. Nucleosomes wrap and compact DNA into chromatin, limiting DNA accessibility to the cellular machineries which require DNA as a template. Histones thereby play a central role in transcription regulation, DNA repair, DNA replication and chromosomal stability. DNA accessibility is regulated via a complex set of post-translational modifications of histones, also called histone code, and nucleosome remodeling. The polypeptide is Histone H3-like protein (Encephalitozoon cuniculi (strain GB-M1) (Microsporidian parasite)).